Consider the following 72-residue polypeptide: MSKVCLLTGKRPIYGNTVSHANNHVRTRFEPNLHTKRIWIEEEKRFVKVKLSAKAMTIIAKTGTATLAKLLK.

The protein belongs to the bacterial ribosomal protein bL28 family.

This is Large ribosomal subunit protein bL28 from Pelodictyon phaeoclathratiforme (strain DSM 5477 / BU-1).